The primary structure comprises 624 residues: MRGLAKLFFLSCSFVSLVSSEKTDESPTAVSDNYMPKATATIDPSVFALSNDFEITDVPTTREYTFDIAKAFASPDGYEREVYVVNNMFPGPVIEANTGDTIIVHVNNHLDEGQSLHWHGLRQLGTAFMDGVPGITQCPIPPGGSFTYNFTVSHQSGTYWWHSHYSNSMADGIWGPLIVHSPNEPLQRGRDYDEDRIVFITDWMHDNSEIIIAALATPEGYKGNIAPPQGDAILINGRGQTNCTATGSSSCFYPPPPEIQVPVNCRVRLRFISATAHPMYRISIDNHPMEVVEADGTAVYGPTVHEISVAPGERYSAIINTNEGKEGDAFWLRTSVALSCMFGAVSQEGLAVVRYTGNGMVSTEEPQTSAWSDLAGVTVPCTGLDQTYTLSPRDSLSAPREPLQSHFFNSERGAFVNVLGNTFQGYGFNNISYQNQIFNPLLSIVQRGGSCENTLVSSRTFPDFGPGNIIINNLDTVIDHPYHLHGNEFQVIGRGTGALSIDNLTNIDFTLDNPVRKDTLWIQGGSWAVLRITADNPGVWALHCHIGWHLTEGKLAVIVVQPSAIGHMESPESWTNLCANTDPNAFGPAKRSSSPSIQSSKTSSFQYLREVKGKVVKRRGAREA.

A signal peptide spans 1-20 (MRGLAKLFFLSCSFVSLVSS). Plastocyanin-like domains are found at residues 72–183 (FASP…HSPN) and 195–343 (DRIV…CMFG). Residues histidine 117 and histidine 119 each coordinate Cu cation. An intrachain disulfide couples cysteine 138 to cysteine 578. The N-linked (GlcNAc...) asparagine glycan is linked to asparagine 149. Cu cation-binding residues include histidine 162 and histidine 164. Residues asparagine 242 and asparagine 430 are each glycosylated (N-linked (GlcNAc...) asparagine). The 94-residue stretch at 469–562 (IIINNLDTVI…GKLAVIVVQP (94 aa)) folds into the Plastocyanin-like 3 domain. Residues histidine 480, histidine 483, and histidine 485 each contribute to the Cu cation site. An N-linked (GlcNAc...) asparagine glycan is attached at asparagine 503. Residues histidine 543, cysteine 544, histidine 545, and histidine 549 each coordinate Cu cation. Positions 579–604 (ANTDPNAFGPAKRSSSPSIQSSKTSS) are disordered. A compositionally biased stretch (low complexity) spans 592 to 604 (SSSPSIQSSKTSS).

It belongs to the multicopper oxidase family. Cu cation serves as cofactor.

It localises to the secreted. Its subcellular location is the cell wall. It carries out the reaction 4 hydroquinone + O2 = 4 benzosemiquinone + 2 H2O. Functionally, laccase that catalyzes the oxidation of certain aromatic compounds, including L-dopa, to quinones, which then polymerize to melanin. Able to oxidize a wide variety of aromatic diphenol and diamino groups in the ortho, meta, and para positions but not monophenolic groups such as in phenol, tyramine, or tyrosine. Plays an important role in virulence. Plays a role in dissemination to extrapulmonary sites but is not involved in pulmonary growth or in elicitation of cellular immune responses in the lung. The chain is Laccase-1 from Cryptococcus neoformans var. neoformans serotype D (strain B-3501A) (Filobasidiella neoformans).